Consider the following 92-residue polypeptide: UPF0213 protein MGAS9429_Spy1198 (92 aa).

In terms of domain architecture, GIY-YIG spans 4–80; it reads KKAYMYVLEC…KRKTRSQKLA (77 aa).

This sequence belongs to the UPF0213 family.

The sequence is that of UPF0213 protein MGAS9429_Spy1198 from Streptococcus pyogenes serotype M12 (strain MGAS9429).